The following is a 470-amino-acid chain: MSKIVKQEENFSKWYTSIIENANLVDYGLVKGTIMFKPYGFAIWKRIQEEFNKILVSLNTAEVCFPMLIPYSEFMKEKEHVEGFNPELFKVSHLGEKKLEDELVIRPTSEISFCNYFKKNIKSYNDLPCILNQWGSVFRVEKNTRPFLRTSEFLWQEQHAVFADKKEAFDFSITMVNEYKKFVNDYLSIAVLMGEKTENERFAGADNTFTIEALMPDGQVLQSATSHYLGTNFAKSYDLKYQTKNNNYDLMFQTSAGLSTRIIGAIIMSHSDNNGLVLPFKIAPIQFAIVTSNEVNKDSDELKAIYKNLFGYKYQTYFVEKSLGLQLQENEIKGIPFQLILGKKEIENNTITIYRRDTREKQNISFKEFNQNFIENLIKEYSSNLFNKTEKRLNSSIEFVNNIDEFKKALDNKKIISAYWSGNAEDEKKLKELTTATPRCFDWNQKIDKTKKCFFTNKPNAKLVYFARAY.

This sequence belongs to the class-II aminoacyl-tRNA synthetase family. ProS type 3 subfamily. As to quaternary structure, homodimer.

It is found in the cytoplasm. The catalysed reaction is tRNA(Pro) + L-proline + ATP = L-prolyl-tRNA(Pro) + AMP + diphosphate. In terms of biological role, catalyzes the attachment of proline to tRNA(Pro) in a two-step reaction: proline is first activated by ATP to form Pro-AMP and then transferred to the acceptor end of tRNA(Pro). This chain is Proline--tRNA ligase, found in Malacoplasma penetrans (strain HF-2) (Mycoplasma penetrans).